A 100-amino-acid polypeptide reads, in one-letter code: NADH-quinone oxidoreductase subunit K (100 aa).

3 helical membrane passes run 4 to 24 (YEYYVALSGLLMVLGFIGVIV), 28 to 48 (IIAMLISTELMLNAVNVAFVA), and 60 to 80 (VFVFFILTIAAAEAAIGLGLI).

The protein belongs to the complex I subunit 4L family. In terms of assembly, NDH-1 is composed of 14 different subunits. Subunits NuoA, H, J, K, L, M, N constitute the membrane sector of the complex.

It is found in the cell inner membrane. It catalyses the reaction a quinone + NADH + 5 H(+)(in) = a quinol + NAD(+) + 4 H(+)(out). Its function is as follows. NDH-1 shuttles electrons from NADH, via FMN and iron-sulfur (Fe-S) centers, to quinones in the respiratory chain. The immediate electron acceptor for the enzyme in this species is believed to be ubiquinone. Couples the redox reaction to proton translocation (for every two electrons transferred, four hydrogen ions are translocated across the cytoplasmic membrane), and thus conserves the redox energy in a proton gradient. This Sulfurihydrogenibium azorense (strain DSM 15241 / OCM 825 / Az-Fu1) protein is NADH-quinone oxidoreductase subunit K.